The primary structure comprises 424 residues: Riboflavin biosynthesis protein RibBA (424 aa).

The segment at 1–206 is DHBP synthase; the sequence is MVTCEAGIAS…VDDLITYRWT (206 aa). Residues 32–33, Asp-37, 145–149, and Glu-169 contribute to the D-ribulose 5-phosphate site; these read RE and RPGHT. Glu-33 is a binding site for Mg(2+). His-148 provides a ligand contact to Mg(2+). The tract at residues 207 to 424 is GTP cyclohydrolase II; that stretch reads FDSLVEHVSS…YETVERTSCC (218 aa). 257 to 261 lines the GTP pocket; it reads RVHSE. The Zn(2+) site is built by Cys-262, Cys-273, and Cys-275. Residues Gln-278, 301–303, and Thr-323 each bind GTP; that span reads EGR. Catalysis depends on Asp-335, which acts as the Proton acceptor; for GTP cyclohydrolase activity. Arg-337 serves as the catalytic Nucleophile; for GTP cyclohydrolase activity. Thr-358 and Lys-363 together coordinate GTP.

The protein in the N-terminal section; belongs to the DHBP synthase family. This sequence in the C-terminal section; belongs to the GTP cyclohydrolase II family. Mg(2+) serves as cofactor. Requires Mn(2+) as cofactor. It depends on Zn(2+) as a cofactor.

It catalyses the reaction D-ribulose 5-phosphate = (2S)-2-hydroxy-3-oxobutyl phosphate + formate + H(+). It carries out the reaction GTP + 4 H2O = 2,5-diamino-6-hydroxy-4-(5-phosphoribosylamino)-pyrimidine + formate + 2 phosphate + 3 H(+). The protein operates within cofactor biosynthesis; riboflavin biosynthesis; 2-hydroxy-3-oxobutyl phosphate from D-ribulose 5-phosphate: step 1/1. Its pathway is cofactor biosynthesis; riboflavin biosynthesis; 5-amino-6-(D-ribitylamino)uracil from GTP: step 1/4. Catalyzes the conversion of D-ribulose 5-phosphate to formate and 3,4-dihydroxy-2-butanone 4-phosphate. Functionally, catalyzes the conversion of GTP to 2,5-diamino-6-ribosylamino-4(3H)-pyrimidinone 5'-phosphate (DARP), formate and pyrophosphate. The polypeptide is Riboflavin biosynthesis protein RibBA (Chlamydia muridarum (strain MoPn / Nigg)).